The following is a 104-amino-acid chain: Histone H4 (104 aa).

A disordered region spans residues 1-21; sequence MAGRGKVGKGYGKVGAKRHTK.

This sequence belongs to the histone H4 family. The nucleosome is a histone octamer containing two molecules each of H2A, H2B, H3 and H4 assembled in one H3-H4 heterotetramer and two H2A-H2B heterodimers. The octamer wraps approximately 147 bp of DNA.

The protein resides in the nucleus. It is found in the chromosome. In terms of biological role, core component of nucleosome. Nucleosomes wrap and compact DNA into chromatin, limiting DNA accessibility to the cellular machineries which require DNA as a template. Histones thereby play a central role in transcription regulation, DNA repair, DNA replication and chromosomal stability. DNA accessibility is regulated via a complex set of post-translational modifications of histones, also called histone code, and nucleosome remodeling. In Sterkiella nova (Ciliate), this protein is Histone H4.